Here is a 424-residue protein sequence, read N- to C-terminus: Zinc finger and BTB domain-containing protein 6 (424 aa).

One can recognise a BTB domain in the interval 33-97; sequence CDVSIYINDT…CYTGALEVKR (65 aa). At S202 the chain carries Phosphoserine. 4 consecutive C2H2-type zinc fingers follow at residues 301 to 323, 326 to 348, 354 to 376, and 382 to 405; these read HQCPRCPRGFLHVENYLRHLKMH, FLCLQCGKTFTQKKNLNRHIRGH, FQCTVCLKTFTAKSTLQDHLNIH, and YKCHCCDMDFKHKSALKKHLTSVH. The interval 402 to 424 is disordered; the sequence is TSVHGRSSGEKLSRPDLKRQSLL. The span at 408-424 shows a compositional bias: basic and acidic residues; sequence SSGEKLSRPDLKRQSLL.

As to expression, widely expressed with highest levels in brain.

Its subcellular location is the nucleus. Functionally, may be involved in transcriptional regulation. The polypeptide is Zinc finger and BTB domain-containing protein 6 (ZBTB6) (Homo sapiens (Human)).